Reading from the N-terminus, the 450-residue chain is Ig mu chain C region (450 aa).

This is Ig mu chain C region from Canis lupus familiaris (Dog).